A 177-amino-acid polypeptide reads, in one-letter code: MTTICSVKYNGQTAIAGDGQVTLGKSIIAKTTAKKIRRIYHDQVVIGFAGGVADAVSLQEMLEGKLESYSGDLRRAAVEMAQSWRKDQTLQKLEAMVIAFNDQDLLLISGNGEVLEPDESVVAIGSGGYYAQAAAVGMLRHASGMTASEIAKEAVNIAADIDVFTDHEIVTDEIEEK.

T2 is an active-site residue. 3 residues coordinate Na(+): A159, D162, and T165.

This sequence belongs to the peptidase T1B family. HslV subfamily. A double ring-shaped homohexamer of HslV is capped on each side by a ring-shaped HslU homohexamer. The assembly of the HslU/HslV complex is dependent on binding of ATP.

The protein localises to the cytoplasm. It carries out the reaction ATP-dependent cleavage of peptide bonds with broad specificity.. With respect to regulation, allosterically activated by HslU binding. Functionally, protease subunit of a proteasome-like degradation complex believed to be a general protein degrading machinery. The polypeptide is ATP-dependent protease subunit HslV (Lactobacillus leichmannii).